Reading from the N-terminus, the 885-residue chain is Chitin synthase 3 (885 aa).

Positions 1–59 (MASQYPGHQLDDIPSTNVYRPPPRHEDDEAEHALLHQNSAYQSQYDDPHSRPLTPGQES) are disordered. The segment covering 23-34 (PRHEDDEAEHAL) has biased composition (basic and acidic residues). Over residues 36–45 (HQNSAYQSQY) the composition is skewed to polar residues. The next 6 membrane-spanning stretches (helical) occupy residues 565–585 (FFLHIQMIYNIVSVLLSWFSL), 620–640 (IINTILQYLYLAFLLLQFILA), 650–670 (VAYIISFCLFGLIQLYVIVLS), 707–727 (IVIIALAATFGLYFVASFLYM), 735–755 (SFAQYLLLMPSFINILMIYAF), and 837–857 (LVATWIFSNALLAVAITSDSL).

It belongs to the chitin synthase family. Class III subfamily.

It localises to the cell membrane. It carries out the reaction [(1-&gt;4)-N-acetyl-beta-D-glucosaminyl](n) + UDP-N-acetyl-alpha-D-glucosamine = [(1-&gt;4)-N-acetyl-beta-D-glucosaminyl](n+1) + UDP + H(+). In terms of biological role, polymerizes chitin, a structural polymer of the cell wall and septum, by transferring the sugar moiety of UDP-GlcNAc to the non-reducing end of the growing chitin polymer. Is not only stable at different pH, but is also able to tolerate a broad temperature range. With CHS2, plays an important role in virulence. The sequence is that of Chitin synthase 3 from Exophiala dermatitidis (Black yeast-like fungus).